The primary structure comprises 182 residues: NADH-dependent FAD reductase (182 aa).

An NAD(+)-binding site is contributed by Asp-16. FAD contacts are provided by residues 47-48 (NS), 62-64 (CVG), and His-98. Position 143 (His-143) interacts with NAD(+).

The protein belongs to the non-flavoprotein flavin reductase family. As to quaternary structure, homodimer.

It catalyses the reaction FADH2 + NAD(+) = FAD + NADH + 2 H(+). It participates in antibiotic biosynthesis. With respect to regulation, the SgcE6-SgcC hydroxylation activity decreases in the presence of excess FAD. Functionally, reductase component of a two-component system involved in the biosynthesis of the enediyne antitumor antibiotic C-1027. SgcE6 provides the FADH(2) required by both the halogenase SgcC3 and the monooxygenase SgcC through free diffusion. Accepts only NADH and FAD as substrates. This chain is NADH-dependent FAD reductase, found in Streptomyces globisporus.